Here is a 217-residue protein sequence, read N- to C-terminus: Ras-related protein RABA1f (217 aa).

20–27 is a GTP binding site; sequence GDSGVGKS. The Effector region motif lies at 42-50; it reads SKSTIGVEF. GTP is bound by residues 68–72, 126–129, and 156–157; these read DTAGQ, NKAD, and SA. 2 S-geranylgeranyl cysteine lipidation sites follow: C214 and C215.

It belongs to the small GTPase superfamily. Rab family.

The protein localises to the cell membrane. Functionally, intracellular vesicle trafficking and protein transport. The protein is Ras-related protein RABA1f (RABA1F) of Arabidopsis thaliana (Mouse-ear cress).